A 184-amino-acid polypeptide reads, in one-letter code: Probable maltose O-acetyltransferase (184 aa).

Residue Asn84 participates in acetyl-CoA binding. Catalysis depends on His114, which acts as the Proton donor/acceptor. Residues Gly141, Ser159, 164–165 (TK), Arg179, and Lys182 contribute to the acetyl-CoA site.

This sequence belongs to the transferase hexapeptide repeat family. As to quaternary structure, homodimer.

It carries out the reaction D-maltose + acetyl-CoA = 1-O-acetylmaltose + CoA. Catalyzes the CoA-dependent transfer of an acetyl group to maltose and other sugars. Acetylates glucose exclusively at the C6 position and maltose at the C6 position of the non-reducing end glucosyl moiety. Is able to acetylate maltooligosaccharides. This is Probable maltose O-acetyltransferase (maa) from Bacillus subtilis (strain 168).